Consider the following 93-residue polypeptide: Protein BOLA2 (93 aa).

Residue C29 is modified to S-glutathionyl cysteine; transient; alternate. A disordered region spans residues 72 to 93 (KAQTPQQWKPPSQDSATLTKDA).

This sequence belongs to the bolA/yrbA family. In terms of assembly, homodimer. Interacts in vitro with GRXS14, GRXS15, GRXS16 and GRXS17, but not with GRXC5. Interacts in vivo only with GRXS17. Can be either glutathionylated or forming covalent homodimers, depending on the oxidation state.

It is found in the cytoplasm. It localises to the nucleus. Its function is as follows. May act either alone or in interaction with glutaredoxin as a redox-regulated transcriptional regulator, or as a factor regulating Fe-S cluster biogenesis. The GRXS17-BOLA2 heterodimer binds a labile, oxygen sensitive iron-sulfur cluster. This Arabidopsis thaliana (Mouse-ear cress) protein is Protein BOLA2.